We begin with the raw amino-acid sequence, 67 residues long: Spiniferin (67 aa).

Positions 1–23 (MKTQLAILLITLVLFQMFSQSDA) are cleaved as a signal peptide. L36 is subject to Leucine amide. Residues 40–67 (GLNDLSDLDELFDGEISKADLDFLREIM) constitute a propeptide that is removed on maturation.

The protein belongs to the non-disulfide-bridged peptide (NDBP) superfamily. Short antimicrobial peptide (group 4) family. In terms of tissue distribution, expressed by the venom gland.

The protein resides in the secreted. It is found in the target cell membrane. Alpha-helical and amphipathic peptide with weak antimicrobial activities against both Gram-positive (MIC=41 uM to &gt;82 uM) and Gram-negative (MIC&gt;82 uM) bacteria. It has extremely weak hemolytic activity against human erythrocytes. In Heterometrus spinifer (Asia giant forest scorpion), this protein is Spiniferin.